A 1132-amino-acid polypeptide reads, in one-letter code: DNA-directed RNA polymerase subunit beta (1132 aa).

This sequence belongs to the RNA polymerase beta chain family. The RNAP catalytic core consists of 2 alpha, 1 beta, 1 beta' and 1 omega subunit. When a sigma factor is associated with the core the holoenzyme is formed, which can initiate transcription.

The catalysed reaction is RNA(n) + a ribonucleoside 5'-triphosphate = RNA(n+1) + diphosphate. DNA-dependent RNA polymerase catalyzes the transcription of DNA into RNA using the four ribonucleoside triphosphates as substrates. The sequence is that of DNA-directed RNA polymerase subunit beta from Carboxydothermus hydrogenoformans (strain ATCC BAA-161 / DSM 6008 / Z-2901).